A 556-amino-acid polypeptide reads, in one-letter code: Glutamine--tRNA ligase (556 aa).

Positions P34–H44 match the 'HIGH' region motif. ATP is bound by residues E35–N37 and H41–S47. The L-glutamine site is built by D67 and Y212. ATP is bound by residues T231, R261–L262, and M269–K271. A 'KMSKS' region motif is present at residues V268–R272.

It belongs to the class-I aminoacyl-tRNA synthetase family. Monomer.

The protein resides in the cytoplasm. It carries out the reaction tRNA(Gln) + L-glutamine + ATP = L-glutaminyl-tRNA(Gln) + AMP + diphosphate. In Vibrio campbellii (strain ATCC BAA-1116), this protein is Glutamine--tRNA ligase.